The sequence spans 553 residues: Urocanate hydratase (553 aa).

NAD(+) is bound by residues 51–52 (GG), Gln129, 175–177 (GMG), Glu195, Arg200, 241–242 (NA), 262–266 (QTSAH), 272–273 (YL), and Tyr321. Cys409 is an active-site residue. Gly491 is a binding site for NAD(+).

The protein belongs to the urocanase family. The cofactor is NAD(+).

The protein localises to the cytoplasm. It catalyses the reaction 4-imidazolone-5-propanoate = trans-urocanate + H2O. Its pathway is amino-acid degradation; L-histidine degradation into L-glutamate; N-formimidoyl-L-glutamate from L-histidine: step 2/3. Functionally, catalyzes the conversion of urocanate to 4-imidazolone-5-propionate. This is Urocanate hydratase from Sphingopyxis alaskensis (strain DSM 13593 / LMG 18877 / RB2256) (Sphingomonas alaskensis).